We begin with the raw amino-acid sequence, 176 residues long: Ribosome maturation factor RimM (176 aa).

The region spanning 96–176 is the PRC barrel domain; that stretch reads PEDEFYWRDL…QILVDWDPDF (81 aa).

This sequence belongs to the RimM family. As to quaternary structure, binds ribosomal protein uS19.

It is found in the cytoplasm. An accessory protein needed during the final step in the assembly of 30S ribosomal subunit, possibly for assembly of the head region. Essential for efficient processing of 16S rRNA. May be needed both before and after RbfA during the maturation of 16S rRNA. It has affinity for free ribosomal 30S subunits but not for 70S ribosomes. This Shewanella piezotolerans (strain WP3 / JCM 13877) protein is Ribosome maturation factor RimM.